We begin with the raw amino-acid sequence, 266 residues long: UPF0294 protein YafD (266 aa).

It belongs to the UPF0294 family.

Its subcellular location is the cytoplasm. The polypeptide is UPF0294 protein YafD (Salmonella typhi).